We begin with the raw amino-acid sequence, 313 residues long: Olfactory receptor 1J2 (313 aa).

The Extracellular portion of the chain corresponds to 1-25 (MSPENQSSVSEFLLLGLPIRPEQQA). Residue Asn5 is glycosylated (N-linked (GlcNAc...) asparagine). Residues 26 to 49 (VFFTLFLGMYLTTVLGNLLIMLLI) form a helical membrane-spanning segment. Residues 50 to 57 (QLDSHLHT) lie on the Cytoplasmic side of the membrane. A helical transmembrane segment spans residues 58–79 (PMYFFLSHLALTDISFSSVTVP). At 80-100 (KMLMDMRTKYKSILYEECISQ) the chain is on the extracellular side. Residues Cys97 and Cys189 are joined by a disulfide bond. Residues 101–120 (MYFFIFFTDLDSFLITSMAY) form a helical membrane-spanning segment. The Cytoplasmic segment spans residues 121 to 139 (DRYVAICHPLHYTVIMREE). Residues 140-158 (LCVFLVAVSWILSCASSLS) form a helical membrane-spanning segment. Residues 159–196 (HTLLLTRLSFCAANTIPHVFCDLAALLKLSCSDIFLNE) are Extracellular-facing. A helical membrane pass occupies residues 197–219 (LVMFTVGVVVITLPFMCILVSYG). Residues 220–236 (YIGATILRVPSTKGIHK) are Cytoplasmic-facing. Residues 237 to 259 (ALSTCGSHLSVVSLYYGSIFGQY) form a helical membrane-spanning segment. Over 260 to 272 (LFPTVSSSIDKDV) the chain is Extracellular. A helical transmembrane segment spans residues 273–292 (IVALMYTVVTPMLNPFIYSL). At 293–313 (RNRDMKEALGKLFSRATFFSW) the chain is on the cytoplasmic side.

This sequence belongs to the G-protein coupled receptor 1 family.

Its subcellular location is the cell membrane. Odorant receptor. The sequence is that of Olfactory receptor 1J2 (OR1J2) from Homo sapiens (Human).